We begin with the raw amino-acid sequence, 141 residues long: Large ribosomal subunit protein uL11 (141 aa).

The protein belongs to the universal ribosomal protein uL11 family. As to quaternary structure, part of the ribosomal stalk of the 50S ribosomal subunit. Interacts with L10 and the large rRNA to form the base of the stalk. L10 forms an elongated spine to which L12 dimers bind in a sequential fashion forming a multimeric L10(L12)X complex. One or more lysine residues are methylated.

Functionally, forms part of the ribosomal stalk which helps the ribosome interact with GTP-bound translation factors. The polypeptide is Large ribosomal subunit protein uL11 (Streptococcus thermophilus (strain CNRZ 1066)).